We begin with the raw amino-acid sequence, 426 residues long: Potassium channel subfamily K member 2 (426 aa).

Topologically, residues 1 to 61 (MLPSASRERP…TTINVMKWKT (61 aa)) are cytoplasmic. 2 important for GNG4 binding and L-glutamate release in astrocytes regions span residues 17–38 (AAPD…LSFS) and 51–61 (DTTINVMKWKT). A helical transmembrane segment spans residues 62–82 (VSTIFLVVVLYLIIGATVFKA). N-linked (GlcNAc...) asparagine glycosylation is found at N110 and N134. An intramembrane region (pore-forming) is located at residues 144–170 (LGSSFFFAGTVITTIGFGNISPRTEGG). K(+) is bound by residues T157, I158, G159, and F160. Residues 157-162 (TIGFGN) are selectivity filter 1. The chain crosses the membrane as a helical span at residues 172 to 192 (IFCIIYALLGIPLFGFLLAGV). Over 193 to 223 (GDQLGTIFGKGIAKVEDTFIKWNVSQTKIRI) the chain is Cytoplasmic. The helical transmembrane segment at 224 to 244 (ISTIIFILFGCVLFVALPAII) threads the bilayer. Positions 253–283 (ALDAIYFVVITLTTIGFGDYVAGGSDIEYLD) form an intramembrane region, pore-forming. The K(+) site is built by T266, I267, G268, and F269. The interval 266–271 (TIGFGD) is selectivity filter 2. The helical transmembrane segment at 288–308 (VVWFWILVGLAYFAAVLSMIG) threads the bilayer. At 309–426 (DWLRVISKKT…EEIAVIENIK (118 aa)) the chain is on the cytoplasmic side. Positions 313-326 (VISKKTKEEVGEFR) are interaction with AKAP5. An essential for chloroform and halothane sensitivity region spans residues 337-385 (TAEFKETRRRLSVEIYDKFQRATSIKRKLSAELAGNHNQELTPCRRTLS). Phosphoserine; by PKA is present on S348.

This sequence belongs to the two pore domain potassium channel (TC 1.A.1.8) family. Homodimer; disulfide-linked. Forms heterodimers with other 2-pore domain K(+) channel subunits, such as KCNK1, KCNK4, KCNK10 and KCNK18. Interacts with AKAP5; the channel is recruited to postsynaptic microdomains by AKAP5 where it can integrate neurotransmitter receptor signals. Part of a complex composed of AKAP5 and ADRB2. Upon AKAP5 binding, the channel is no longer sensitive to intracellular acidification, membrane stretch or arachidonic acid stimuli. Interacts with POPDC1; the interaction enhances KCNK2 surface expression and is inhibited by cAMP. Interacts (via N-terminus) with G-protein subunit GNG4 (via C-terminus); this interaction confers ion selectivity to L-glutamate and Cl(-) anions. Post-translationally, phosphorylation at Ser-348 controls the reversible conversion from a leak channel to a voltage-dependent channel. Detected in kidney, adrenal gland and brain where it is preferentially expressed in the amygdala but not found in thalamus, hypothalamus, hippocampus or substantia nigra.

Its subcellular location is the cell membrane. The protein localises to the endoplasmic reticulum membrane. The protein resides in the cell projection. It is found in the axon. It localises to the dendrite. Its subcellular location is the postsynaptic density membrane. The protein localises to the sarcolemma. It catalyses the reaction K(+)(in) = K(+)(out). The catalysed reaction is L-glutamate(out) = L-glutamate(in). The enzyme catalyses chloride(in) = chloride(out). It carries out the reaction Rb(+)(in) = Rb(+)(out). It catalyses the reaction Cs(+)(in) = Cs(+)(out). Its activity is regulated as follows. Activated by various stimuli including intracellular acidic pH, mechanical stretch and polyunsaturated fatty acids such as arachidonic acid. Activated by volatile anesthetics such as chloroform, halothane, and isoflurane. Its function is as follows. K(+) channel that conducts voltage-dependent outward rectifying currents upon membrane depolarization. Voltage sensing is coupled to K(+) electrochemical gradient in an 'ion flux gating' mode where outward but not inward ion flow opens the gate. Converts to voltage-independent 'leak' conductance mode upon stimulation by various stimuli including mechanical membrane stretch, acidic pH, heat and lipids. Reversibly converts between a voltage-insensitive K(+) 'leak' channel and a voltage-dependent outward rectifying K(+) channel in a phosphorylation-dependent manner. Homo- and heterodimerizes to form functional channels with distinct regulatory and gating properties. In trigeminal ganglia sensory neurons, the heterodimer of KCNK2/TREK-1 and KCNK18/TRESK inhibits neuronal firing and neurogenic inflammation by stabilizing the resting membrane potential at K(+) equilibrium potential as well as by regulating the threshold of action potentials and the spike frequency. At trigeminal A-beta afferent nerves, the heterodimer of KCNK2/TREK-1 and KCNK4/TRAAK is mostly coexpressed at nodes of Ranvier where it conducts voltage-independent mechanosensitive and thermosensitive currents, allowing rapid action potential repolarization, high speed and high frequence saltatory conduction on myelinated nerves to ensure prompt sensory responses. In hippocampal astrocytes, the heterodimer of KCNK2/TREK-1 and KCNK1/TWIK-1 allows passive K(+) conductance under basal conditions, but changes ion selectivity and becomes permeable to L-glutamate and Cl(-) ions upon binding to G-protein subunit GNG4 in stimulated astrocytes. Mediates rapid L-glutamate release in response to activation of G-protein-coupled receptors, such as F2R and CNR1. In hippocampal pyramidal neurons, the homodimer of KCNK2/TREK-1 contributes to gamma-aminobutyric acid (GABA) B-induced slow inhibitory postsynaptic potential. Associates with AKAP5 and Gs-protein-coupled receptor B2AR at postsynaptic dense bodies and converts to a leak channel no longer sensitive to stimulation by arachidonic acid, acidic pH or mechanical stress, nor inhibited by Gq-coupled receptors but still under the negative control of Gs-coupled receptors. Permeable to other monovalent cations such as Rb(+) and Cs(+). Does not display channel activity but reduces the channel activity of isoform 1 and isoform 2 and reduces cell surface expression of isoform 2. The polypeptide is Potassium channel subfamily K member 2 (Homo sapiens (Human)).